Consider the following 181-residue polypeptide: ECF RNA polymerase sigma factor EcfG (181 aa).

A sigma-70 factor domain-2 region spans residues 15–77; it reads VPSLRAFAIS…FRSDYRKRRR (63 aa). Positions 103 to 155 are sigma-70 factor domain-4; sequence EEFRAALDKLPQDQREALILVGASGFSYEDAAAICGCAVGTIKSRVNRARSKL.

It belongs to the sigma-70 factor family. ECF subfamily.

Functionally, sigma factors are initiation factors that promote the attachment of RNA polymerase to specific initiation sites and are then released. Regulates expression of hpnP under a variety of stresses, including high temperature, pH stress, and presence of nonionic osmolytes. This chain is ECF RNA polymerase sigma factor EcfG, found in Rhodopseudomonas palustris (strain TIE-1).